Here is a 28-residue protein sequence, read N- to C-terminus: Cruzioseptin-4 (28 aa).

At Glu-25 the chain carries Glutamic acid 1-amide. The propeptide occupies 27–28 (EH).

As to expression, expressed by the skin glands.

Its subcellular location is the secreted. In terms of biological role, has antimicrobial activity. The polypeptide is Cruzioseptin-4 (Cruziohyla calcarifer (Splendid leaf frog)).